The following is a 124-amino-acid chain: Large ribosomal subunit protein bL12 (124 aa).

Belongs to the bacterial ribosomal protein bL12 family. In terms of assembly, homodimer. Part of the ribosomal stalk of the 50S ribosomal subunit. Forms a multimeric L10(L12)X complex, where L10 forms an elongated spine to which 2 to 4 L12 dimers bind in a sequential fashion. Binds GTP-bound translation factors.

Forms part of the ribosomal stalk which helps the ribosome interact with GTP-bound translation factors. Is thus essential for accurate translation. This chain is Large ribosomal subunit protein bL12, found in Cereibacter sphaeroides (strain ATCC 17025 / ATH 2.4.3) (Rhodobacter sphaeroides).